The following is a 569-amino-acid chain: MFLELKAQATSILKDAIQKAGLEIEDSELYFETSSYADLASRAAFRLASLYRQNPKELATRIVSAVEIPDGSYIGKVSASGPYINFHASRRYMDKTVATVLEEKEKFGCGAPKDKILLEHTSANPNGPLHVGHIRNSIIGDTLARILRRAGYDVEVQYYVNDMGRQIAVVSWACERFELDLSRKSDSAIADVYIKANVELDKNPEYVKEIDALMEKVEAGDVKTIDSFYKAVSLAISGIKETLLRLNVVHDKFVSESTFLKSGAVHDIVERIKATGRTKTDKGALVVDLSDYGFKKTLVIQRSNGTSLYTTRDLAYHEWKAGQADRIIDIFGADHKLISGQLRATLNSIGVKEPEVVIFEFVSLPEGSMSTRRGQFISADELFDRVTEAALEQVETRRPETSEEFKKQVAEMVGIGAVRYDIVRVSPEKSTVFNWKEALDFEKQGAPYIQYSHARACSILEKAKEEAAWNSSAEIDPSLLVEDTEIDLIKKMASFDRVIDLAARELKPHVLAIYARELADAFNQFYRFVPVIAAEDEKVRASRLALVNCARIVLANSLDTLGIAAPESM.

The 'HIGH' region motif lies at 123–133 (ANPNGPLHVGH).

This sequence belongs to the class-I aminoacyl-tRNA synthetase family.

The protein localises to the cytoplasm. The catalysed reaction is tRNA(Arg) + L-arginine + ATP = L-arginyl-tRNA(Arg) + AMP + diphosphate. In Methanosarcina barkeri (strain Fusaro / DSM 804), this protein is Arginine--tRNA ligase.